Here is an 878-residue protein sequence, read N- to C-terminus: Serine/threonine-protein kinase N3 (878 aa).

REM-1 domains lie at 2-77 (EHRK…QVLL), 86-165 (SEPQ…SGSP), and 169-238 (PDLL…RLPP). A Phosphoserine modification is found at serine 164. Residues 461–525 (PNTASPPKGR…TPCTKRPHMD (65 aa)) form a disordered region. The Protein kinase domain occupies 548 to 807 (FRCLAVLGRG…AEEIKVQPFF (260 aa)). Residues 554-562 (LGRGHFGKV) and lysine 577 each bind ATP. The active-site Proton acceptor is aspartate 673. Residues threonine 707, threonine 711, and threonine 849 each carry the phosphothreonine modification. The 71-residue stretch at 808–878 (RTTNWQALLA…DFVSEQFLES (71 aa)) folds into the AGC-kinase C-terminal domain.

It belongs to the protein kinase superfamily. AGC Ser/Thr protein kinase family. PKC subfamily. Autophosphorylated.

The protein localises to the nucleus. The protein resides in the cytoplasm. It localises to the perinuclear region. It carries out the reaction L-seryl-[protein] + ATP = O-phospho-L-seryl-[protein] + ADP + H(+). The enzyme catalyses L-threonyl-[protein] + ATP = O-phospho-L-threonyl-[protein] + ADP + H(+). Its activity is regulated as follows. Two specific sites, Thr-707 (activation loop of the kinase domain) and Thr-849 (turn motif), need to be phosphorylated for its full activation. Functionally, contributes to invasiveness in malignant prostate cancer. The polypeptide is Serine/threonine-protein kinase N3 (Pkn3) (Mus musculus (Mouse)).